The following is a 141-amino-acid chain: MVDMDRISISLPTKLLGEFDEIIGDRGYASRSEAIRDSIRDYIIKHKWIHSLEGERSGTITIIYDHHASDLMERITTIQHDYSNLIVATLHMHMDHDNCMEVVIVRGDAKIIRELTDRLTSQKGVKQVKLNVMVPGGNIPE.

Residues His-80, His-91, His-93, and Cys-99 each contribute to the Ni(2+) site.

Belongs to the transcriptional regulatory CopG/NikR family. It depends on Ni(2+) as a cofactor.

In terms of biological role, transcriptional regulator. The chain is Putative nickel-responsive regulator from Methanococcus aeolicus (strain ATCC BAA-1280 / DSM 17508 / OCM 812 / Nankai-3).